Here is a 274-residue protein sequence, read N- to C-terminus: Rhamnulose-1-phosphate aldolase (274 aa).

Residue E117 is part of the active site. Zn(2+) is bound by residues H141, H143, and H212.

The protein belongs to the aldolase class II family. RhaD subfamily. As to quaternary structure, homotetramer. Zn(2+) serves as cofactor.

The protein localises to the cytoplasm. The catalysed reaction is L-rhamnulose 1-phosphate = (S)-lactaldehyde + dihydroxyacetone phosphate. It functions in the pathway carbohydrate degradation; L-rhamnose degradation; glycerone phosphate from L-rhamnose: step 3/3. In terms of biological role, catalyzes the reversible cleavage of L-rhamnulose-1-phosphate to dihydroxyacetone phosphate (DHAP) and L-lactaldehyde. The chain is Rhamnulose-1-phosphate aldolase from Escherichia coli O127:H6 (strain E2348/69 / EPEC).